A 234-amino-acid polypeptide reads, in one-letter code: Polycomb group RING finger protein 5-A (234 aa).

The RING-type zinc-finger motif lies at Cys18–Gly57. Residues Phe97–Tyr130 are disordered.

As to quaternary structure, component of a PRC1-like complex.

The protein localises to the nucleus. Its function is as follows. Component of Polycomb group (PcG) multiprotein complexes; the complex class is required to maintain the transcriptionally repressive state of some genes. The sequence is that of Polycomb group RING finger protein 5-A from Danio rerio (Zebrafish).